The following is a 221-amino-acid chain: Keratin-associated protein 10-3 (221 aa).

Repeat copies occupy residues 26–30 (CCEPP), 31–35 (CCATS), 36–40 (CCAPA), 57–61 (CCQAA), 79–83 (CCQQS), 89–93 (CCTSS), 99–103 (CCVPV), 104–108 (CCKPV), 109–113 (CCVPV), 114–118 (CCKPV), 119–123 (CCKPI), 124–128 (CCVPV), 136–140 (CCQQS), 146–150 (CCTTS), 151–155 (CCRPS), 177–181 (CCAPA), 188–192 (CCRPA), and 210–214 (CCGLS). Positions 26–214 (CCEPPCCATS…RLSSACCGLS (189 aa)) are 18 X 5 AA repeats of C-C-X(3).

Belongs to the KRTAP type 10 family. Interacts with hair keratins. In terms of tissue distribution, restricted to a narrow region of the hair fiber cuticle, lying approximately 20 cell layers above the apex of the dermal papilla of the hair root; not detected in any other tissues.

Functionally, in the hair cortex, hair keratin intermediate filaments are embedded in an interfilamentous matrix, consisting of hair keratin-associated proteins (KRTAP), which are essential for the formation of a rigid and resistant hair shaft through their extensive disulfide bond cross-linking with abundant cysteine residues of hair keratins. The matrix proteins include the high-sulfur and high-glycine-tyrosine keratins. In Homo sapiens (Human), this protein is Keratin-associated protein 10-3 (KRTAP10-3).